Consider the following 606-residue polypeptide: Anthranilate synthase alpha subunit 2, chloroplastic (606 aa).

Residues 1-49 (MESIAAATFTPSRLAARPATPAAAAAPVRARAAVAAGGRRRTSRRGGVR) constitute a chloroplast transit peptide.

The protein belongs to the anthranilate synthase component I family. As to quaternary structure, heterotetramer consisting of two non-identical subunits: a beta subunit and a large alpha subunit.

It localises to the plastid. It is found in the chloroplast. The catalysed reaction is chorismate + L-glutamine = anthranilate + pyruvate + L-glutamate + H(+). It functions in the pathway amino-acid biosynthesis; L-tryptophan biosynthesis; L-tryptophan from chorismate: step 1/5. Feedback inhibition by tryptophan. In terms of biological role, part of a heterotetrameric complex that catalyzes the two-step biosynthesis of anthranilate, an intermediate in the biosynthesis of L-tryptophan. In the first step, the glutamine-binding beta subunit of anthranilate synthase (AS) provides the glutamine amidotransferase activity which generates ammonia as a substrate that, along with chorismate, is used in the second step, catalyzed by the large alpha subunit of AS to produce anthranilate. This Oryza sativa subsp. japonica (Rice) protein is Anthranilate synthase alpha subunit 2, chloroplastic.